Reading from the N-terminus, the 332-residue chain is ADP-L-glycero-D-manno-heptose-6-epimerase (332 aa).

Residues 10–11, 31–32, Lys38, Lys53, 75–79, and Asn92 contribute to the NADP(+) site; these read MI, DK, and MGACS. The active-site Proton acceptor is the Tyr145. NADP(+) is bound at residue Lys149. Asn173 contacts substrate. Val174 and Lys182 together coordinate NADP(+). Residue Lys182 is the Proton acceptor of the active site. Residues Arg184, His191, 205 to 208, Arg219, and Tyr290 contribute to the substrate site; that span reads FKSY.

Belongs to the NAD(P)-dependent epimerase/dehydratase family. HldD subfamily. In terms of assembly, homopentamer. The cofactor is NADP(+).

It carries out the reaction ADP-D-glycero-beta-D-manno-heptose = ADP-L-glycero-beta-D-manno-heptose. Its pathway is nucleotide-sugar biosynthesis; ADP-L-glycero-beta-D-manno-heptose biosynthesis; ADP-L-glycero-beta-D-manno-heptose from D-glycero-beta-D-manno-heptose 7-phosphate: step 4/4. Functionally, catalyzes the interconversion between ADP-D-glycero-beta-D-manno-heptose and ADP-L-glycero-beta-D-manno-heptose via an epimerization at carbon 6 of the heptose. This is ADP-L-glycero-D-manno-heptose-6-epimerase from Fusobacterium nucleatum subsp. nucleatum (strain ATCC 25586 / DSM 15643 / BCRC 10681 / CIP 101130 / JCM 8532 / KCTC 2640 / LMG 13131 / VPI 4355).